A 199-amino-acid polypeptide reads, in one-letter code: Elongation factor Ts, chloroplastic (199 aa).

The protein belongs to the EF-Ts family.

The protein resides in the plastid. The protein localises to the chloroplast. Functionally, associates with the EF-Tu.GDP complex and induces the exchange of GDP to GTP. It remains bound to the aminoacyl-tRNA.EF-Tu.GTP complex up to the GTP hydrolysis stage on the ribosome. The chain is Elongation factor Ts, chloroplastic (tsf) from Galdieria sulphuraria (Red alga).